The primary structure comprises 191 residues: Peptidyl-tRNA hydrolase (191 aa).

Tyrosine 17 is a tRNA binding site. The active-site Proton acceptor is the histidine 22. Tyrosine 68, asparagine 70, and asparagine 116 together coordinate tRNA.

Belongs to the PTH family. In terms of assembly, monomer.

The protein localises to the cytoplasm. It catalyses the reaction an N-acyl-L-alpha-aminoacyl-tRNA + H2O = an N-acyl-L-amino acid + a tRNA + H(+). In terms of biological role, hydrolyzes ribosome-free peptidyl-tRNAs (with 1 or more amino acids incorporated), which drop off the ribosome during protein synthesis, or as a result of ribosome stalling. Its function is as follows. Catalyzes the release of premature peptidyl moieties from peptidyl-tRNA molecules trapped in stalled 50S ribosomal subunits, and thus maintains levels of free tRNAs and 50S ribosomes. This is Peptidyl-tRNA hydrolase from Francisella tularensis subsp. mediasiatica (strain FSC147).